The following is a 148-amino-acid chain: Snaclec stejaggregin-A subunit beta-3 (148 aa).

Positions 1–23 (MGRFISVSFGLLVVFLSLSGAGA) are cleaved as a signal peptide. Cysteines 27 and 38 form a disulfide. One can recognise a C-type lectin domain in the interval 34-145 (YDLYCYKVFK…CSRTHYVVCK (112 aa)). Residues asparagine 47 and asparagine 78 are each glycosylated (N-linked (GlcNAc...) asparagine). 2 disulfide bridges follow: cysteine 55–cysteine 144 and cysteine 121–cysteine 136.

The protein belongs to the snaclec family. Heteromultimer; disulfide-linked. In terms of tissue distribution, expressed by the venom gland.

The protein resides in the secreted. In terms of biological role, interferes with one step of hemostasis (modulation of platelet aggregation, or coagulation cascade, for example). In Trimeresurus stejnegeri (Chinese green tree viper), this protein is Snaclec stejaggregin-A subunit beta-3.